A 708-amino-acid polypeptide reads, in one-letter code: Metabotropic glutamate receptor-like protein L (708 aa).

The N-terminal stretch at 1 to 24 is a signal peptide; it reads MKLIIKNLILLLVSCLYFLSNVSC. Residues Asn21, Asn235, Asn310, and Asn366 are each glycosylated (N-linked (GlcNAc...) asparagine). Residues 25 to 370 lie on the Extracellular side of the membrane; it reads DQEVHMALLL…TTGSINKTFM (346 aa). The chain crosses the membrane as a helical span at residues 371–391; it reads AVSILEMAICLIIGIIVIFFF. Over 392–401 the chain is Cytoplasmic; the sequence is SRNINIIYST. Residues 402 to 422 traverse the membrane as a helical segment; it reads IPYCLTILLGASLIAVAIFLW. The Extracellular segment spans residues 423–435; the sequence is NLRDLNTQICTSK. The chain crosses the membrane as a helical span at residues 436–456; it reads IWMASLGYNVLIGFIIIKSSL. The Cytoplasmic portion of the chain corresponds to 457–479; that stretch reads IYFKFKEMVKSKNEKISPIPFGR. The chain crosses the membrane as a helical span at residues 480-500; that stretch reads IVLWFVPLLIIDCVLLIIYST. Topologically, residues 501 to 531 are extracellular; that stretch reads SGNPGKIDSLGLDGIGRYEYTQNCVNNLTGD. Asn527 is a glycosylation site (N-linked (GlcNAc...) asparagine). A helical transmembrane segment spans residues 532–552; sequence IILYIILVFHGLQLLYGCVIA. Residues 553–568 lie on the Cytoplasmic side of the membrane; that stretch reads WKTRVIDLEEFIEAHD. Residues 569-589 form a helical membrane-spanning segment; that stretch reads FATAIYLITFCSFIIVILMVG. The Extracellular segment spans residues 590–597; it reads VTSTSNRN. Residues 598-618 form a helical membrane-spanning segment; it reads TIISACAIFSSFSCVLIIFGA. At 619 to 708 the chain is on the cytoplasmic side; the sequence is KFWKIYKPVE…SSRAAAQNDN (90 aa). Positions 638 to 681 are disordered; that stretch reads KPQKSYSGSGGSGNSSGSKSKKTSAHSSTSGVKSGTSAPTQTSQ. Residues 669–681 are compositionally biased toward polar residues; that stretch reads VKSGTSAPTQTSQ.

This sequence in the N-terminal section; belongs to the BMP lipoprotein family. In the C-terminal section; belongs to the G-protein coupled receptor 3 family. GABA-B receptor subfamily.

It is found in the membrane. This chain is Metabotropic glutamate receptor-like protein L (far1), found in Dictyostelium discoideum (Social amoeba).